The sequence spans 415 residues: ORC1-type DNA replication protein 2 (415 aa).

ATP contacts are provided by residues 69 to 73 (TGKSV), Y215, and R227.

The protein belongs to the CDC6/cdc18 family.

Functionally, involved in regulation of DNA replication. The protein is ORC1-type DNA replication protein 2 (cdc6-2) of Sulfolobus acidocaldarius (strain ATCC 33909 / DSM 639 / JCM 8929 / NBRC 15157 / NCIMB 11770).